A 324-amino-acid polypeptide reads, in one-letter code: tRNA pseudouridine synthase B (324 aa).

His-43 lines the substrate pocket. Asp-48 functions as the Nucleophile in the catalytic mechanism. 3 residues coordinate substrate: Tyr-76, Tyr-179, and Leu-200.

The protein belongs to the pseudouridine synthase TruB family. Type 1 subfamily.

It catalyses the reaction uridine(55) in tRNA = pseudouridine(55) in tRNA. Responsible for synthesis of pseudouridine from uracil-55 in the psi GC loop of transfer RNAs. The polypeptide is tRNA pseudouridine synthase B (Yersinia pestis bv. Antiqua (strain Nepal516)).